The following is a 675-amino-acid chain: Acyl-coenzyme A oxidase 3, peroxisomal (675 aa).

A peroxisome-targeting transit peptide spans 1-34 (MSDNRALRRAHVLANHILQSNPPSSNPSLSRELC). An FAD-binding site is contributed by 442–457 (AVGGQGVKTENLVGQL).

This sequence belongs to the acyl-CoA oxidase family. Requires FAD as cofactor. In terms of tissue distribution, most abundant in flowers and senescing rosette leaves. Lower expression in hypocotyls, stems, young rosette leaves, cotyledons, cauline leaves and root tip of young seedlings.

The protein resides in the peroxisome. It catalyses the reaction a 2,3-saturated acyl-CoA + O2 = a (2E)-enoyl-CoA + H2O2. Its pathway is lipid metabolism; peroxisomal fatty acid beta-oxidation. In terms of biological role, catalyzes the desaturation of medium-chain acyl-CoAs to 2-trans-enoyl-CoAs. Active on C8:0- to C14:0-CoA with a maximal activity on C12:0-CoA. The sequence is that of Acyl-coenzyme A oxidase 3, peroxisomal (ACX3) from Arabidopsis thaliana (Mouse-ear cress).